The following is a 213-amino-acid chain: High frequency lysogenization protein HflD homolog (213 aa).

Residues 79-126 (QGLNAELTRYTLSLMVLERKLSSAKGALDTLGNRINGLQRQLEHFDLQ) adopt a coiled-coil conformation.

It belongs to the HflD family.

The protein localises to the cytoplasm. Its subcellular location is the cell inner membrane. The protein is High frequency lysogenization protein HflD homolog of Shigella flexneri serotype 5b (strain 8401).